Reading from the N-terminus, the 103-residue chain is Small ribosomal subunit protein uS10 (103 aa).

The protein belongs to the universal ribosomal protein uS10 family. In terms of assembly, part of the 30S ribosomal subunit.

Its function is as follows. Involved in the binding of tRNA to the ribosomes. This chain is Small ribosomal subunit protein uS10, found in Pectobacterium atrosepticum (strain SCRI 1043 / ATCC BAA-672) (Erwinia carotovora subsp. atroseptica).